The chain runs to 232 residues: Aquaporin Z 2 (232 aa).

2 helical membrane-spanning segments follow: residues 9-29 and 32-52; these read FLGT…ASAF and VGIG…TMAY. Positions 63–65 match the NPA 1 motif; it reads NPA. The next 3 helical transmembrane spans lie at 82–102, 129–149, and 158–178; these read VSYV…LYVI, LTAA…IILG, and GFAP…SIPV. Residues 184–186 carry the NPA 2 motif; it reads NPA. The chain crosses the membrane as a helical span at residues 200–220; sequence LSQLWLFWIAPLFGAAIAGIV.

It belongs to the MIP/aquaporin (TC 1.A.8) family. As to quaternary structure, homotetramer.

It is found in the cell inner membrane. It catalyses the reaction H2O(in) = H2O(out). Channel that permits osmotically driven movement of water in both directions. It is involved in the osmoregulation and in the maintenance of cell turgor during volume expansion in rapidly growing cells. It mediates rapid entry or exit of water in response to abrupt changes in osmolarity. In Rhizobium meliloti (strain 1021) (Ensifer meliloti), this protein is Aquaporin Z 2.